The following is a 670-amino-acid chain: Solute carrier organic anion transporter family member 1A6 (670 aa).

Over 1-20 the chain is Cytoplasmic; that stretch reads MGEPEKRAGTHGIRCFAKIK. Residues 21–40 form a helical membrane-spanning segment; that stretch reads VFLLALTWAYASKALSATYM. At 41-59 the chain is on the extracellular side; that stretch reads NSMLTQIERRFNISTSIVG. Asn-52 carries N-linked (GlcNAc...) asparagine glycosylation. The helical transmembrane segment at 60-80 threads the bilayer; that stretch reads LINGSFEVGNLLLIIFVSYFG. Topologically, residues 81 to 86 are cytoplasmic; the sequence is RKRHRP. The helical transmembrane segment at 87–111 threads the bilayer; sequence IMIGIGCAVMGLGCFIISLPHFLMG. The Extracellular portion of the chain corresponds to 112–155; that stretch reads RYEYETTISPTSNLSSNSFLCMENRTQTLKPTQDPAECVKEMKS. 2 N-linked (GlcNAc...) asparagine glycosylation sites follow: Asn-124 and Asn-135. A helical membrane pass occupies residues 156–184; sequence LMWIYVLVGNIIRGIGETPIMPLGISYIE. Topologically, residues 185-203 are cytoplasmic; sequence DFAKSENSPFYIGILEVGK. Residues 204–224 traverse the membrane as a helical segment; that stretch reads ITGPIAAIWLGSFCATIYVDM. Over 225-242 the chain is Extracellular; that stretch reads GSVNTDDLTITPTDTRCV. Residues 243 to 267 form a helical membrane-spanning segment; the sequence is GAWWIGFLVCAGLNILISIPFFFFP. The Cytoplasmic portion of the chain corresponds to 268–311; it reads KTFPKEGPEDMANETKNDEGDKHREKAKEEKRGITKDFFLFMKS. A disordered region spans residues 276–295; it reads EDMANETKNDEGDKHREKAK. The chain crosses the membrane as a helical span at residues 312-333; it reads LSCNPIYMLCVLTSVLQVNGFV. At 334-353 the chain is on the extracellular side; sequence SIFTFKPKYLEHHYGKSSSE. Residues 354–377 traverse the membrane as a helical segment; the sequence is AIFLMGLYTLPSVCVGYLISGFIM. Over 378 to 381 the chain is Cytoplasmic; that stretch reads KKFK. A helical transmembrane segment spans residues 382-405; that stretch reads ITLKKAAFISYCLGMSECLLSLCN. Over 406–513 the chain is Extracellular; that stretch reads FMLTCDNVPI…PDCANKLQYF (108 aa). Residues 433–488 form the Kazal-like domain; that stretch reads NTVLADCNTRCSCLTKTWDPVCGDNGLAYITPCLAGCEKSVGSGINMVLQDCSCIQ. 3 disulfides stabilise this stretch: Cys-439-Cys-469, Cys-445-Cys-465, and Cys-454-Cys-486. Asn-492 carries an N-linked (GlcNAc...) asparagine glycan. The helical transmembrane segment at 514 to 536 threads the bilayer; sequence LIITVFCSFFYSLSLIPGYMIFL. The Cytoplasmic portion of the chain corresponds to 537–545; it reads RCMKSEEKS. A helical transmembrane segment spans residues 546–571; the sequence is LGIGLQAFCMRILGGILAPIYFGVLI. The Extracellular portion of the chain corresponds to 572–605; it reads DRTCLHWGTQKCGEPGACRTYEINSFRSIYLGLP. A helical transmembrane segment spans residues 606-623; sequence AALRGSSYLPAFFILRLM. The Cytoplasmic portion of the chain corresponds to 624–670; sequence RKFQFPGDINSPVTDHVEMMLTEKESEHTDVHRSPQVENDGELKTKL. Ser-634 carries the phosphoserine modification. Residues 647–670 form a disordered region; it reads KESEHTDVHRSPQVENDGELKTKL.

The protein belongs to the organo anion transporter (TC 2.A.60) family.

Its subcellular location is the cell membrane. May mediate the Na(+)-independent transport of organic anions. The polypeptide is Solute carrier organic anion transporter family member 1A6 (Slco1a6) (Rattus norvegicus (Rat)).